Reading from the N-terminus, the 188-residue chain is Elongation factor P (188 aa).

It belongs to the elongation factor P family.

It is found in the cytoplasm. Its pathway is protein biosynthesis; polypeptide chain elongation. In terms of biological role, involved in peptide bond synthesis. Stimulates efficient translation and peptide-bond synthesis on native or reconstituted 70S ribosomes in vitro. Probably functions indirectly by altering the affinity of the ribosome for aminoacyl-tRNA, thus increasing their reactivity as acceptors for peptidyl transferase. The sequence is that of Elongation factor P from Rickettsia rickettsii (strain Iowa).